The following is a 203-amino-acid chain: ATP-dependent Clp protease proteolytic subunit 2 (203 aa).

S100 serves as the catalytic Nucleophile. H125 is an active-site residue.

This sequence belongs to the peptidase S14 family. In terms of assembly, fourteen ClpP subunits assemble into 2 heptameric rings which stack back to back to give a disk-like structure with a central cavity, resembling the structure of eukaryotic proteasomes.

The protein resides in the cytoplasm. It carries out the reaction Hydrolysis of proteins to small peptides in the presence of ATP and magnesium. alpha-casein is the usual test substrate. In the absence of ATP, only oligopeptides shorter than five residues are hydrolyzed (such as succinyl-Leu-Tyr-|-NHMec, and Leu-Tyr-Leu-|-Tyr-Trp, in which cleavage of the -Tyr-|-Leu- and -Tyr-|-Trp bonds also occurs).. Cleaves peptides in various proteins in a process that requires ATP hydrolysis. Has a chymotrypsin-like activity. Plays a major role in the degradation of misfolded proteins. This chain is ATP-dependent Clp protease proteolytic subunit 2, found in Thermobifida fusca (strain YX).